The sequence spans 488 residues: 3-octaprenyl-4-hydroxybenzoate carboxy-lyase (488 aa).

A Mn(2+)-binding site is contributed by asparagine 172. Residues 175–177 (IYR), 189–191 (RWL), and 194–195 (RG) each bind prenylated FMN. Glutamate 238 contacts Mn(2+). The active-site Proton donor is the aspartate 287.

Belongs to the UbiD family. Homohexamer. Requires prenylated FMN as cofactor. It depends on Mn(2+) as a cofactor.

Its subcellular location is the cell membrane. It carries out the reaction a 4-hydroxy-3-(all-trans-polyprenyl)benzoate + H(+) = a 2-(all-trans-polyprenyl)phenol + CO2. It functions in the pathway cofactor biosynthesis; ubiquinone biosynthesis. Functionally, catalyzes the decarboxylation of 3-octaprenyl-4-hydroxy benzoate to 2-octaprenylphenol, an intermediate step in ubiquinone biosynthesis. The sequence is that of 3-octaprenyl-4-hydroxybenzoate carboxy-lyase from Pseudomonas fluorescens (strain ATCC BAA-477 / NRRL B-23932 / Pf-5).